A 129-amino-acid chain; its full sequence is Flagellar assembly factor FliW (129 aa).

Belongs to the FliW family. In terms of assembly, interacts with translational regulator CsrA and flagellin(s).

The protein resides in the cytoplasm. Acts as an anti-CsrA protein, binds CsrA and prevents it from repressing translation of its target genes, one of which is flagellin. Binds to flagellin and participates in the assembly of the flagellum. This is Flagellar assembly factor FliW from Campylobacter jejuni subsp. doylei (strain ATCC BAA-1458 / RM4099 / 269.97).